The following is a 143-amino-acid chain: Host transcription reprogramming factor 8 (143 aa).

A signal peptide spans 1-19; it reads MHTYKFIQIALLFASVALA. Positions 24–34 are enriched in pro residues; sequence PSPPNPPPVPQ. Residues 24-43 form a disordered region; that stretch reads PSPPNPPPVPQLPNSETKSN. The C2H2-type 1 zinc-finger motif lies at 48–71; that stretch reads HSCEFCGVVKPSGPAYLEHYHQNH. The tract at residues 77-99 is disordered; it reads GKLATPSPPNPPPVPTQKVETHA. The segment covering 82–91 has biased composition (pro residues); it reads PSPPNPPPVP. The segment at 103–126 adopts a C2H2-type 2 zinc-finger fold; sequence HGCEWCNKVEPSGPAYIKHYKENH.

The protein resides in the secreted. The protein localises to the host nucleus. In terms of biological role, probable secreted effector that translocates into the nuclei of host cells to reprogram the expression of targeted genes by binding on effector binding elements in rice. The sequence is that of Host transcription reprogramming factor 8 from Pyricularia oryzae (strain 70-15 / ATCC MYA-4617 / FGSC 8958) (Rice blast fungus).